Here is a 141-residue protein sequence, read N- to C-terminus: MALLDVNALVALAWDSHIHHARIREWFTANATLGWATCPLTEAGFVRVSTNPKVLPSAIGIADARRVLVALRAVGGHRFLADDVSLVDDDVPLIVGYRQVTDAHLLTLARRRGVRLVTFDAGVFTLAQQRPKTPVELLTIL.

Mg(2+)-binding residues include D5 and D102.

It belongs to the PINc/VapC protein family. Mg(2+) is required as a cofactor.

The protein resides in the secreted. Toxic component of a type II toxin-antitoxin (TA) system. An RNase. Its cognate antitoxin is VapB38. The protein is Ribonuclease VapC38 of Mycobacterium tuberculosis (strain ATCC 25618 / H37Rv).